Reading from the N-terminus, the 545-residue chain is Hyaluronidase PH-20 (545 aa).

The N-terminal stretch at 1–35 is a signal peptide; the sequence is MGVLKFKHIFFGSAVELSGVFQIVFIFLLIPCCLT. Cystine bridges form between Cys-60–Cys-355 and Cys-224–Cys-239. N-linked (GlcNAc...) asparagine glycosylation is present at Asn-82. Residue Glu-148 is the Proton donor of the active site. Asn-180 carries N-linked (GlcNAc...) asparagine glycosylation. Asn-372 carries N-linked (GlcNAc...) asparagine glycosylation. 3 cysteine pairs are disulfide-bonded: Cys-380-Cys-391, Cys-385-Cys-439, and Cys-441-Cys-468.

Belongs to the glycosyl hydrolase 56 family. As to expression, testis.

It localises to the cell membrane. It carries out the reaction Random hydrolysis of (1-&gt;4)-linkages between N-acetyl-beta-D-glucosamine and D-glucuronate residues in hyaluronate.. Involved in sperm-egg adhesion. Upon fertilization sperm must first penetrate a layer of cumulus cells that surrounds the egg before reaching the zona pellucida. The cumulus cells are embedded in a matrix containing hyaluronic acid which is formed prior to ovulation. This protein aids in penetrating the layer of cumulus cells by digesting hyaluronic acid. The protein is Hyaluronidase PH-20 (SPAM1) of Oryctolagus cuniculus (Rabbit).